A 314-amino-acid chain; its full sequence is Replication initiation protein (314 aa).

A compositionally biased stretch (polar residues) spans 1 to 10 (MSKNNHANHS). Residues 1–25 (MSKNNHANHSNHLENHDLDNFSKTG) are disordered. The span at 11–20 (NHLENHDLDN) shows a compositional bias: basic and acidic residues.

The protein belongs to the plasmid replication initiation factor family.

In terms of biological role, this protein is probably a specific topoisomerase involved in initiating replication. This protein is specifically required and may be rate-limiting for replication of the plasmid in vivo. The protein is Replication initiation protein (repN) of Staphylococcus aureus.